Reading from the N-terminus, the 533-residue chain is Putative phosphate permease jhp_1384 (533 aa).

12 helical membrane-spanning segments follow: residues 23–43, 47–67, 81–101, 129–149, 156–176, 182–202, 221–241, 248–268, 286–306, 338–358, 372–392, and 509–529; these read IALA…FGQA, GLLL…IGAN, AISM…GAII, VMLA…LIGA, SVVG…AINW, IVAS…FFLM, VVPY…IVKV, VGFE…FILF, VNEL…FAHG, VPLW…SLYG, LDKM…LLAS, and LVTV…LGFI.

It belongs to the inorganic phosphate transporter (PiT) (TC 2.A.20) family.

It is found in the cell membrane. Functionally, potential transporter for phosphate. The chain is Putative phosphate permease jhp_1384 from Helicobacter pylori (strain J99 / ATCC 700824) (Campylobacter pylori J99).